The primary structure comprises 295 residues: Indole-3-glycerol phosphate synthase (295 aa).

This sequence belongs to the TrpC family.

The enzyme catalyses 1-(2-carboxyphenylamino)-1-deoxy-D-ribulose 5-phosphate + H(+) = (1S,2R)-1-C-(indol-3-yl)glycerol 3-phosphate + CO2 + H2O. It participates in amino-acid biosynthesis; L-tryptophan biosynthesis; L-tryptophan from chorismate: step 4/5. This chain is Indole-3-glycerol phosphate synthase, found in Prochlorococcus marinus (strain NATL2A).